A 471-amino-acid chain; its full sequence is MAAKVFTQNPIYSQSLVRDKTPQQKHNLDHFSISQHTSKRLVVSSSTMSPPISSSPLSLPSSSSSQAIPPSRAPAVTLPLSRVWREIQGSNNWENLIEPLSPILQQEITRYGNLLSASYKGFDLNPNSKRYLSCKYGKKNLLKESGIHDPDGYQVTKYIYATPDINLNPIKNEPNRARWIGYVAVSSDESVKRLGRRDILVTFRGTVTNHEWLANLKSSLTPARLDPHNPRPDVKVESGFLGLYTSGESESKFGLESCREQLLSEISRLMNKHKGEEISITLAGHSMGSSLAQLLAYDIAELGMNQRRDEKPVPVTVFSFAGPRVGNLGFKKRCEELGVKVLRITNVNDPITKLPGFLFNENFRSLGGVYELPWSCSCYTHVGVELTLDFFDVQNISCVHDLETYITLVNRPRCSKLAVNEDNFGGEFLNRTSELMFSKGRRQALHFTNAATNAAYLLCSISNHMLYYNIF.

Residues 1–88 (MAAKVFTQNP…PLSRVWREIQ (88 aa)) constitute a chloroplast transit peptide. The tract at residues 44–71 (SSSTMSPPISSSPLSLPSSSSSQAIPPS) is disordered. Residues 284 to 288 (GHSMG) carry the GXSXG motif. Residue Ser286 is the Acyl-ester intermediate of the active site. Residues Asp349 and His400 each act as charge relay system in the active site.

This sequence belongs to the AB hydrolase superfamily. Lipase family. In terms of tissue distribution, expressed in leaves and seedlings. Not detected in flowers, siliques or roots.

It is found in the plastid. Its subcellular location is the chloroplast. It catalyses the reaction a 1,2-diacyl-3-O-(beta-D-galactosyl)-sn-glycerol + 2 H2O = 3-beta-D-galactosyl-sn-glycerol + 2 a fatty acid + 2 H(+). The enzyme catalyses a 1,2-diacyl-sn-glycero-3-phosphocholine + H2O = a 2-acyl-sn-glycero-3-phosphocholine + a fatty acid + H(+). The catalysed reaction is a 1,2-diacyl-3-O-[alpha-D-galactosyl-(1-&gt;6)-beta-D-galactosyl]-sn-glycerol + H2O = acyl-3-O-[alpha-D-galactosyl-(1-&gt;6)-beta-D-galactosyl]-sn-glycerol + a fatty acid + H(+). In terms of biological role, sn-1-specific phospholipase that releases free fatty acids from phosphatidylcholine. Has a higher galactolipase activity than phospholipase A1 activity when digalactosyldiacylglycerol (DGDG) is used as substrate. Catalyzes the initial step of jasmonic acid biosynthesis. Required for the biosynthesis of basal-level endogenous jasmonate in vegetative tissues. Regulates leaves growth. Not essential for jasmonate biosynthesis after wounding or upon pathogen infection. In Arabidopsis thaliana (Mouse-ear cress), this protein is Galactolipase DONGLE, chloroplastic.